Consider the following 475-residue polypeptide: Membrane-bound lytic murein transglycosylase F (475 aa).

A signal peptide spans 1–15 (MKKLLLILCCITLLA). The non-LT domain stretch occupies residues 16 to 258 (ACQKVVVEQE…HLNEKYFAHV (243 aa)). An LT domain region spans residues 259-475 (KRFDYVDTRA…KTEAAQPQQP (217 aa)). The active site involves E303.

The protein in the N-terminal section; belongs to the bacterial solute-binding protein 3 family. It in the C-terminal section; belongs to the transglycosylase Slt family.

Its subcellular location is the cell outer membrane. The enzyme catalyses Exolytic cleavage of the (1-&gt;4)-beta-glycosidic linkage between N-acetylmuramic acid (MurNAc) and N-acetylglucosamine (GlcNAc) residues in peptidoglycan, from either the reducing or the non-reducing ends of the peptidoglycan chains, with concomitant formation of a 1,6-anhydrobond in the MurNAc residue.. In terms of biological role, murein-degrading enzyme that degrades murein glycan strands and insoluble, high-molecular weight murein sacculi, with the concomitant formation of a 1,6-anhydromuramoyl product. Lytic transglycosylases (LTs) play an integral role in the metabolism of the peptidoglycan (PG) sacculus. Their lytic action creates space within the PG sacculus to allow for its expansion as well as for the insertion of various structures such as secretion systems and flagella. This Shewanella halifaxensis (strain HAW-EB4) protein is Membrane-bound lytic murein transglycosylase F.